The primary structure comprises 248 residues: 3-deoxy-manno-octulosonate cytidylyltransferase (248 aa).

This sequence belongs to the KdsB family.

The protein resides in the cytoplasm. The enzyme catalyses 3-deoxy-alpha-D-manno-oct-2-ulosonate + CTP = CMP-3-deoxy-beta-D-manno-octulosonate + diphosphate. Its pathway is nucleotide-sugar biosynthesis; CMP-3-deoxy-D-manno-octulosonate biosynthesis; CMP-3-deoxy-D-manno-octulosonate from 3-deoxy-D-manno-octulosonate and CTP: step 1/1. It functions in the pathway bacterial outer membrane biogenesis; lipopolysaccharide biosynthesis. In terms of biological role, activates KDO (a required 8-carbon sugar) for incorporation into bacterial lipopolysaccharide in Gram-negative bacteria. This Escherichia coli (strain K12 / MC4100 / BW2952) protein is 3-deoxy-manno-octulosonate cytidylyltransferase.